A 513-amino-acid chain; its full sequence is Proline-rich receptor-like protein kinase PERK3 (513 aa).

The Extracellular portion of the chain corresponds to M1–T123. N-linked (GlcNAc...) asparagine glycosylation occurs at N11. Positions L27 to M36 are enriched in polar residues. The segment at L27–S119 is disordered. A glycan (N-linked (GlcNAc...) asparagine) is linked at N66. Residues P78–R89 are compositionally biased toward low complexity. Positions G99–F111 are enriched in polar residues. The helical transmembrane segment at G124–L144 threads the bilayer. Residues C145–L513 are Cytoplasmic-facing. T172 carries the post-translational modification Phosphothreonine. The 152-residue stretch at F183–D334 folds into the Protein kinase domain. ATP-binding positions include L189–V197 and K211. Y256 is subject to Phosphotyrosine. D307 (proton acceptor) is an active-site residue. Position 340 is a phosphoserine (S340). Phosphothreonine occurs at positions 341 and 346. Y354 is modified (phosphotyrosine).

Belongs to the protein kinase superfamily. Ser/Thr protein kinase family. Expressed at low levels in inflorescence bolt, flower buds, siliques, roots, seedlings and leaves.

It is found in the cell membrane. It catalyses the reaction L-seryl-[protein] + ATP = O-phospho-L-seryl-[protein] + ADP + H(+). The catalysed reaction is L-threonyl-[protein] + ATP = O-phospho-L-threonyl-[protein] + ADP + H(+). This chain is Proline-rich receptor-like protein kinase PERK3 (PERK3), found in Arabidopsis thaliana (Mouse-ear cress).